A 485-amino-acid polypeptide reads, in one-letter code: Cobyric acid synthase (485 aa).

Residues 248–435 (VLKVVVPVLP…LHGLFESPDA (188 aa)) enclose the GATase cobBQ-type domain. Cys329 functions as the Nucleophile in the catalytic mechanism. The active site involves His427.

It belongs to the CobB/CobQ family. CobQ subfamily.

Its pathway is cofactor biosynthesis; adenosylcobalamin biosynthesis. In terms of biological role, catalyzes amidations at positions B, D, E, and G on adenosylcobyrinic A,C-diamide. NH(2) groups are provided by glutamine, and one molecule of ATP is hydrogenolyzed for each amidation. This Stutzerimonas stutzeri (strain A1501) (Pseudomonas stutzeri) protein is Cobyric acid synthase.